The sequence spans 166 residues: Probable glucosamine 6-phosphate N-acetyltransferase 2 (166 aa).

Residues Val-21–Phe-166 form the N-acetyltransferase domain. Substrate-binding positions include Ser-43, Lys-93–Arg-96, and Glu-105–Val-107. Gly-115–Leu-120 provides a ligand contact to acetyl-CoA. Residue Tyr-136–Lys-137 coordinates substrate. Tyr-150–Lys-152 is a binding site for acetyl-CoA.

Belongs to the acetyltransferase family. GNA1 subfamily. In terms of assembly, homodimer.

The protein localises to the endoplasmic reticulum membrane. The catalysed reaction is D-glucosamine 6-phosphate + acetyl-CoA = N-acetyl-D-glucosamine 6-phosphate + CoA + H(+). Its pathway is nucleotide-sugar biosynthesis; UDP-N-acetyl-alpha-D-glucosamine biosynthesis; N-acetyl-alpha-D-glucosamine 1-phosphate from alpha-D-glucosamine 6-phosphate (route I): step 1/2. Functionally, acetyltransferase involved in UDP-N-acetylglucosamine (UDP-GlcNAc) biosynthesis. UDP-GlcNAc is an essential metabolite that serves as an initial sugar donor of N-glycan synthesis and thus plays an important role in protein and lipid glycosylation. In Oryza sativa subsp. japonica (Rice), this protein is Probable glucosamine 6-phosphate N-acetyltransferase 2.